The sequence spans 416 residues: MLEQMGIAAKAASYKLALLSSGEKNRVLEKIADELEAQMESILSANVQDVEQARANGLSEAMLDRLTLTPARLKAIADDVRQVCNLADPVGQVIDGGLLDSGLRLERRRVPLGVVGVIYEARPNVTVDVASLCLKTGNAVILRGGKETHRTNSATVRVIQKALKACGLPEAAVQAIDNPDRSLVNEMLRMDKYIDMLIPRGGAGLHKLCREQSTIPVITGGIGVCHIFVDSSADIAPALKIIVNAKTQRPSTCNTVETLLVHQDIAERFLPALSKQMAESGVTLHGDETVMQVLHGPAKLVPLKPEELDNEFLSLDLNVVVVENMDGAITHIREHGTQHSDAILTCDMHNAARFVNEVDSAAVYVNASTRFTDGGQFGLGAEVAVSTQKLHARGPMGLEALTTYKWIGFGDGTIRA.

It belongs to the gamma-glutamyl phosphate reductase family.

It is found in the cytoplasm. The enzyme catalyses L-glutamate 5-semialdehyde + phosphate + NADP(+) = L-glutamyl 5-phosphate + NADPH + H(+). It functions in the pathway amino-acid biosynthesis; L-proline biosynthesis; L-glutamate 5-semialdehyde from L-glutamate: step 2/2. Its function is as follows. Catalyzes the NADPH-dependent reduction of L-glutamate 5-phosphate into L-glutamate 5-semialdehyde and phosphate. The product spontaneously undergoes cyclization to form 1-pyrroline-5-carboxylate. In Salmonella newport (strain SL254), this protein is Gamma-glutamyl phosphate reductase.